Consider the following 200-residue polypeptide: ATP-dependent Clp protease proteolytic subunit (200 aa).

The active-site Nucleophile is the Ser103. His128 is a catalytic residue.

Belongs to the peptidase S14 family. As to quaternary structure, fourteen ClpP subunits assemble into 2 heptameric rings which stack back to back to give a disk-like structure with a central cavity, resembling the structure of eukaryotic proteasomes.

It is found in the cytoplasm. The catalysed reaction is Hydrolysis of proteins to small peptides in the presence of ATP and magnesium. alpha-casein is the usual test substrate. In the absence of ATP, only oligopeptides shorter than five residues are hydrolyzed (such as succinyl-Leu-Tyr-|-NHMec, and Leu-Tyr-Leu-|-Tyr-Trp, in which cleavage of the -Tyr-|-Leu- and -Tyr-|-Trp bonds also occurs).. Cleaves peptides in various proteins in a process that requires ATP hydrolysis. Has a chymotrypsin-like activity. Plays a major role in the degradation of misfolded proteins. The protein is ATP-dependent Clp protease proteolytic subunit of Vibrio vulnificus (strain CMCP6).